Consider the following 634-residue polypeptide: MSMLKNLKSPAELKGLSVKELEVLAGEIRTKIIDTVSQTGGHLASSLGVVELTIALHHVLNTPVDKIVWDVGHQAYAHKLLTGRLDRFDTLRQLGGISGFPKREESPYDAFDVGHSSTSISAALGMAAARDCKNGKEKFVAVIGDGSLTGGMAFEALNQAGDQNKNLIVILNDNEMSISQNVGALSSLINRKMTSELVVRLKKEAENFLGHVPRIGKDLLKVARKAEESLKGFFTPGMLFEAFGFDYVGPLNGHRLETLIPALENVANLEGPVLVHVVTRKGKGFEPAEKNPSLFHGVGPFDKETGEVRASKGGPASFTGVFGSTLTAMAEKDDRIVAITAAMLEGTGLKEFSKRYPSRFFDVGIAEQHAVTFAAGLACQGMRPVVALYSTFLQRAYDNVVHDVALQRLPVTFAIDRGGLVGADGPTHHGVFDYSFLRHIPNMVVIAPRDEIELQRAMLTGTQHDGPLAYRYPRGKALGLELPDSVESMPIGKGEKLRDGSDAVIFALGVVCKEALVASDILAGEGLSVAVVDPRFLKPLDQQLLIAEARRTGVVVTVEENVRQGGFGSAVLEMLADEGLAVRVLRIGLPDRFIEQGTQQQLYARYGLDAEGIAASVRNFMHHDRGDASSTALA.

Residues His73 and 114–116 (GHS) each bind thiamine diphosphate. Asp145 serves as a coordination point for Mg(2+). Thiamine diphosphate contacts are provided by residues 146–147 (GS), Asn174, Phe285, and Glu367. Mg(2+) is bound at residue Asn174.

Belongs to the transketolase family. DXPS subfamily. In terms of assembly, homodimer. It depends on Mg(2+) as a cofactor. Thiamine diphosphate is required as a cofactor.

It carries out the reaction D-glyceraldehyde 3-phosphate + pyruvate + H(+) = 1-deoxy-D-xylulose 5-phosphate + CO2. The protein operates within metabolic intermediate biosynthesis; 1-deoxy-D-xylulose 5-phosphate biosynthesis; 1-deoxy-D-xylulose 5-phosphate from D-glyceraldehyde 3-phosphate and pyruvate: step 1/1. Functionally, catalyzes the acyloin condensation reaction between C atoms 2 and 3 of pyruvate and glyceraldehyde 3-phosphate to yield 1-deoxy-D-xylulose-5-phosphate (DXP). This chain is 1-deoxy-D-xylulose-5-phosphate synthase, found in Syntrophotalea carbinolica (strain DSM 2380 / NBRC 103641 / GraBd1) (Pelobacter carbinolicus).